The primary structure comprises 182 residues: UPF0397 protein BCAH820_2657 (182 aa).

Helical transmembrane passes span 9-29 (VVAI…GFTI), 40-60 (AILT…IGLI), 71-91 (WGIW…MGFI), 114-134 (ITGL…DIIV), and 142-162 (IVIQ…VLGL).

Belongs to the UPF0397 family.

Its subcellular location is the cell membrane. In Bacillus cereus (strain AH820), this protein is UPF0397 protein BCAH820_2657.